The primary structure comprises 871 residues: Probable receptor-like protein kinase At2g21480 (871 aa).

The N-terminal stretch at 1–39 (MEIRKKPNIPMCLVLDSSSRPFMTLLFTILLFLTGLASA) is a signal peptide. The Extracellular segment spans residues 40 to 439 (VGAVGGSPTA…GQRASMGKQG (400 aa)). N-linked (GlcNAc...) asparagine glycans are attached at residues Asn169, Asn182, Asn253, Asn316, and Asn381. The chain crosses the membrane as a helical span at residues 440 to 460 (MVATAGFVMMFGAFVGLGAMV). The Cytoplasmic segment spans residues 461–871 (YKWKKRPQDW…FTQFASLNGR (411 aa)). The 273-residue stretch at 525-797 (FDASEIIGVG…GDVLWNLEYA (273 aa)) folds into the Protein kinase domain. ATP-binding positions include 531–539 (IGVGGFGNV) and Lys553. The active-site Proton acceptor is the Asp649. The segment at 808–871 (KAEAEEVETP…FTQFASLNGR (64 aa)) is disordered. Over residues 817–839 (PKPVAVPAAAPTSPAATTAAASE) the composition is skewed to low complexity. Over residues 854–871 (DQHSGTTMFTQFASLNGR) the composition is skewed to polar residues.

The protein belongs to the protein kinase superfamily. Ser/Thr protein kinase family.

It is found in the membrane. In Arabidopsis thaliana (Mouse-ear cress), this protein is Probable receptor-like protein kinase At2g21480.